A 481-amino-acid chain; its full sequence is Cobyric acid synthase (481 aa).

Residues 248–435 enclose the GATase cobBQ-type domain; it reads ALTVAWLAFS…LHGMFGSDRF (188 aa). Residue Cys-330 is the Nucleophile of the active site. His-427 is an active-site residue.

Belongs to the CobB/CobQ family. CobQ subfamily.

Its pathway is cofactor biosynthesis; adenosylcobalamin biosynthesis. Functionally, catalyzes amidations at positions B, D, E, and G on adenosylcobyrinic A,C-diamide. NH(2) groups are provided by glutamine, and one molecule of ATP is hydrogenolyzed for each amidation. In Cereibacter sphaeroides (strain ATCC 17025 / ATH 2.4.3) (Rhodobacter sphaeroides), this protein is Cobyric acid synthase.